The sequence spans 641 residues: Epithelial sodium channel subunit beta (641 aa).

Over 1 to 50 (MHVKKYLLKCLHRLQKGPGYTYKELLVWYCDNTNTHGPKRIIREGPKKKA) the chain is Cytoplasmic. A helical transmembrane segment spans residues 51–71 (MWFLITLLFASLVCWQWGVFI). Over 72–533 (KTYLSWEVSV…GGQFGFWMGG (462 aa)) the chain is Extracellular. Intrachain disulfides connect Cys98-Cys273, Cys185-Cys190, Cys197-Cys204, Cys250-Cys257, Cys362-Cys449, Cys387-Cys445, Cys391-Cys441, Cys400-Cys427, and Cys402-Cys416. Asn141 is a glycosylation site (N-linked (GlcNAc...) asparagine). Residues Asn261 and Asn379 are each glycosylated (N-linked (GlcNAc...) asparagine). A helical membrane pass occupies residues 534 to 554 (SVLCLIEFAEIIIDFVWITII). Residues 555-641 (KLVALAKGLR…VESDSEGDAV (87 aa)) lie on the Cytoplasmic side of the membrane. Positions 596-641 (GHRSPDAEAYPDEQALPIPGTPPPNYDSLRLQPLDVVESDSEGDAV) are disordered. Positions 617–621 (PPPNY) match the PY motif; recruits WW domain-containing proteins and is thereby required for ubiquitination and inhibition of the channel by NEDD4 and NEDD4L motif. The span at 632 to 641 (VESDSEGDAV) shows a compositional bias: acidic residues. 2 positions are modified to phosphoserine: Ser634 and Ser636.

This sequence belongs to the amiloride-sensitive sodium channel (TC 1.A.6) family. SCNN1B subfamily. In terms of assembly, component of the heterotrimeric epithelial sodium channel (ENaC) composed of an alpha/SCNN1A, a beta/SCNN1B and a gamma/SCNN1G subunit. Interacts with WWP1 (via WW domains). Interacts with WWP2 (via WW domains); inhibits the channel. Interacts with the full-length immature form of PCSK9 (pro-PCSK9). Interacts (N-glycosylated) with BPIFA1; the interaction is direct and inhibits the proteolytic processing of SCNN1A and SCNN1G and the activation of ENaC. Post-translationally, ubiquitinated. Can be ubiquitinated at multiple sites and undergo monoubiquitination and polyubiquitination. Ubiquitination by NEDD4 or NEDD4L inhibits the ENaC channel through endocytosis, intracellular retention and degradation of its individual subunits. However, some studies could not confirm the ubiquitination of this subunit of the ENaC. In terms of processing, phosphorylated on serine and threonine residues. Aldosterone and insulin increase the basal level of phosphorylation. N-glycosylated. N-glycosylation is required for interaction with BPIFA1.

It is found in the apical cell membrane. It localises to the cytoplasmic vesicle membrane. It catalyses the reaction Na(+)(in) = Na(+)(out). With respect to regulation, originally identified and characterized by its inhibition by the diuretic drug amiloride. Its function is as follows. This is one of the three pore-forming subunits of the heterotrimeric epithelial sodium channel (ENaC), a critical regulator of sodium balance and fluid homeostasis. ENaC operates in epithelial tissues, where it mediates the electrodiffusion of sodium ions from extracellular fluid through the apical membrane of cells, with water following osmotically. It plays a key role in maintaining sodium homeostasis through electrogenic sodium reabsorption in the kidneys. Additionally, ENaC is essential for airway surface liquid homeostasis, which is crucial for proper mucus clearance. In Oryctolagus cuniculus (Rabbit), this protein is Epithelial sodium channel subunit beta.